Reading from the N-terminus, the 1022-residue chain is ATPase MORC2B (1022 aa).

Ala-2 bears the N-acetylalanine mark. Residues Asn-39, 87–89 (SAK), and 99–105 (RYGNGLK) contribute to the ATP site. Asn-39 is a Mg(2+) binding site. A coiled-coil region spans residues 285–362 (KTRAEQEVKK…RDAKQQALKE (78 aa)). Lys-427 contributes to the ATP binding site. A CW-type zinc finger spans residues 490 to 544 (AMQVPTTIQCDLCLKWRTLPFQLSAVEEGYPINWVCSMNPDPEQDQCEAFELKQK). Positions 499, 502, 525, and 536 each coordinate Zn(2+). A coiled-coil region spans residues 555–583 (KTQEERQKQLTEKIQQEQRKLKALKKIKP). Ser-615 carries the post-translational modification Phosphoserine. A Glycyl lysine isopeptide (Lys-Gly) (interchain with G-Cter in SUMO2) cross-link involves residue Lys-649. Ser-690, Ser-724, Ser-733, and Ser-737 each carry phosphoserine. Lys-758 is covalently cross-linked (Glycyl lysine isopeptide (Lys-Gly) (interchain with G-Cter in SUMO2)). Ser-768 and Ser-770 each carry phosphoserine. Thr-827 is subject to Phosphothreonine. Phosphoserine occurs at positions 846 and 851. Lys-922 is covalently cross-linked (Glycyl lysine isopeptide (Lys-Gly) (interchain with G-Cter in SUMO2)). A coiled-coil region spans residues 962-1001 (QAKVSEESLRISQKKLQETEEKLQKLRTNIQTLLQMAQQG).

Interacts with Morc2a. In terms of tissue distribution, protein is abundant in testes but not detected in other adult tissues examined (at protein level). Detected in germ cells with a distinct developmental-specific expression pattern but not in somatic cells such as Sertoli cells.

It is found in the nucleus. The enzyme catalyses ATP + H2O = ADP + phosphate + H(+). In terms of biological role, required for chromosomal synapsis and meiotic recombination in males and females. This is ATPase MORC2B from Mus musculus (Mouse).